Here is a 465-residue protein sequence, read N- to C-terminus: Siroheme synthase (465 aa).

Residues 1 to 203 (MDFLPLFHSL…GRPAEAERLL (203 aa)) form a precorrin-2 dehydrogenase /sirohydrochlorin ferrochelatase region. NAD(+) is bound by residues 22–23 (EV) and 43–44 (PQ). At Ser-128 the chain carries Phosphoserine. The uroporphyrinogen-III C-methyltransferase stretch occupies residues 217 to 465 (GEVYLVGAGP…AWFEGAREGA (249 aa)). Residue Pro-226 participates in S-adenosyl-L-methionine binding. Asp-249 (proton acceptor) is an active-site residue. Lys-271 acts as the Proton donor in catalysis. Residues 302–304 (GGD), Ile-307, 332–333 (TA), Met-384, and Gly-413 each bind S-adenosyl-L-methionine.

In the N-terminal section; belongs to the precorrin-2 dehydrogenase / sirohydrochlorin ferrochelatase family. The protein in the C-terminal section; belongs to the precorrin methyltransferase family.

It catalyses the reaction uroporphyrinogen III + 2 S-adenosyl-L-methionine = precorrin-2 + 2 S-adenosyl-L-homocysteine + H(+). The catalysed reaction is precorrin-2 + NAD(+) = sirohydrochlorin + NADH + 2 H(+). The enzyme catalyses siroheme + 2 H(+) = sirohydrochlorin + Fe(2+). It participates in cofactor biosynthesis; adenosylcobalamin biosynthesis; precorrin-2 from uroporphyrinogen III: step 1/1. It functions in the pathway cofactor biosynthesis; adenosylcobalamin biosynthesis; sirohydrochlorin from precorrin-2: step 1/1. The protein operates within porphyrin-containing compound metabolism; siroheme biosynthesis; precorrin-2 from uroporphyrinogen III: step 1/1. Its pathway is porphyrin-containing compound metabolism; siroheme biosynthesis; siroheme from sirohydrochlorin: step 1/1. It participates in porphyrin-containing compound metabolism; siroheme biosynthesis; sirohydrochlorin from precorrin-2: step 1/1. Functionally, multifunctional enzyme that catalyzes the SAM-dependent methylations of uroporphyrinogen III at position C-2 and C-7 to form precorrin-2 via precorrin-1. Then it catalyzes the NAD-dependent ring dehydrogenation of precorrin-2 to yield sirohydrochlorin. Finally, it catalyzes the ferrochelation of sirohydrochlorin to yield siroheme. This is Siroheme synthase from Pseudomonas paraeruginosa (strain DSM 24068 / PA7) (Pseudomonas aeruginosa (strain PA7)).